Here is a 427-residue protein sequence, read N- to C-terminus: Light-independent protochlorophyllide reductase subunit N (427 aa).

Residues Cys-28, Cys-53, and Cys-114 each contribute to the [4Fe-4S] cluster site.

The protein belongs to the BchN/ChlN family. As to quaternary structure, protochlorophyllide reductase is composed of three subunits; BchL, BchN and BchB. Forms a heterotetramer of two BchB and two BchN subunits. The cofactor is [4Fe-4S] cluster.

The enzyme catalyses chlorophyllide a + oxidized 2[4Fe-4S]-[ferredoxin] + 2 ADP + 2 phosphate = protochlorophyllide a + reduced 2[4Fe-4S]-[ferredoxin] + 2 ATP + 2 H2O. The protein operates within porphyrin-containing compound metabolism; bacteriochlorophyll biosynthesis (light-independent). In terms of biological role, component of the dark-operative protochlorophyllide reductase (DPOR) that uses Mg-ATP and reduced ferredoxin to reduce ring D of protochlorophyllide (Pchlide) to form chlorophyllide a (Chlide). This reaction is light-independent. The NB-protein (BchN-BchB) is the catalytic component of the complex. The polypeptide is Light-independent protochlorophyllide reductase subunit N (Dinoroseobacter shibae (strain DSM 16493 / NCIMB 14021 / DFL 12)).